The primary structure comprises 373 residues: Queuine tRNA-ribosyltransferase (373 aa).

The Proton acceptor role is filled by Asp90. Residues 90-94 (DSGGF), Asp144, Gln193, and Gly220 each bind substrate. Residues 251–257 (GVGTPED) form an RNA binding region. The active-site Nucleophile is Asp270. The interval 275–279 (TRNAR) is RNA binding; important for wobble base 34 recognition. The Zn(2+) site is built by Cys308, Cys310, Cys313, and His339.

It belongs to the queuine tRNA-ribosyltransferase family. Homodimer. Within each dimer, one monomer is responsible for RNA recognition and catalysis, while the other monomer binds to the replacement base PreQ1. Zn(2+) serves as cofactor.

It catalyses the reaction 7-aminomethyl-7-carbaguanine + guanosine(34) in tRNA = 7-aminomethyl-7-carbaguanosine(34) in tRNA + guanine. It functions in the pathway tRNA modification; tRNA-queuosine biosynthesis. Its function is as follows. Catalyzes the base-exchange of a guanine (G) residue with the queuine precursor 7-aminomethyl-7-deazaguanine (PreQ1) at position 34 (anticodon wobble position) in tRNAs with GU(N) anticodons (tRNA-Asp, -Asn, -His and -Tyr). Catalysis occurs through a double-displacement mechanism. The nucleophile active site attacks the C1' of nucleotide 34 to detach the guanine base from the RNA, forming a covalent enzyme-RNA intermediate. The proton acceptor active site deprotonates the incoming PreQ1, allowing a nucleophilic attack on the C1' of the ribose to form the product. After dissociation, two additional enzymatic reactions on the tRNA convert PreQ1 to queuine (Q), resulting in the hypermodified nucleoside queuosine (7-(((4,5-cis-dihydroxy-2-cyclopenten-1-yl)amino)methyl)-7-deazaguanosine). The sequence is that of Queuine tRNA-ribosyltransferase from Campylobacter jejuni (strain RM1221).